Here is a 63-residue protein sequence, read N- to C-terminus: Potassium channel toxin Sp4 (63 aa).

An N-terminal signal peptide occupies residues 1-20; that stretch reads MNKVHFALFLLVLTVLAVSG. 3 disulfides stabilise this stretch: Cys-31–Cys-53, Cys-38–Cys-58, and Cys-42–Cys-60.

It belongs to the long chain scorpion toxin family. Class 2 subfamily. In terms of tissue distribution, expressed by the venom gland.

The protein resides in the secreted. Its function is as follows. This recombinant toxin selectively inhibits mouse voltage-gated potassium channel Kv1.3/KCNA3 (IC(50)=24.73 nM). The chain is Potassium channel toxin Sp4 from Scorpiops pococki (Scorpion).